We begin with the raw amino-acid sequence, 194 residues long: Large ribosomal subunit protein bL9c (194 aa).

The N-terminal 39 residues, 1–39 (MASSTLSSLSSTPLQHSFAANLKTCSQFPNKSSGFMVFA), are a transit peptide targeting the chloroplast.

It belongs to the bacterial ribosomal protein bL9 family. As to quaternary structure, part of the 50S ribosomal subunit.

The protein localises to the plastid. Its subcellular location is the chloroplast. Functionally, binds to the 23S rRNA. This chain is Large ribosomal subunit protein bL9c (RPL9), found in Pisum sativum (Garden pea).